The primary structure comprises 311 residues: Dehydrogenase/reductase SDR family member 7C (311 aa).

The first 18 residues, 1 to 18 (MGVTAVLMLPLLLLGISG), serve as a signal peptide directing secretion. NAD(+) is bound by residues Ser47, Leu49, Tyr191, Lys195, and Ser226. Residue Tyr191 is the Proton acceptor of the active site.

It belongs to the short-chain dehydrogenases/reductases (SDR) family.

The protein localises to the sarcoplasmic reticulum membrane. It catalyses the reaction all-trans-retinol + NAD(+) = all-trans-retinal + NADH + H(+). NADH-dependent oxidoreductase which catalyzes the oxidation of all-trans-retinol to all-trans-retinal. Plays a role in the regulation of cardiac and skeletal muscle metabolic functions. Maintains Ca(2+) intracellular homeostasis by repressing Ca(2+) release from the sarcoplasmic reticulum (SR) in myotubes, possibly through local alternations in NAD/NADH or retinol/retinal. Also plays a role in Ca(2+) homeostasis by controlling Ca(2+) overload in the cytosol and the SR in myotubes. Involved in glucose uptake into skeletal muscles and muscle performance by activating PI3K and mTORC2-mediated AKT1 phosphorylation signaling pathways, possibly through the action of its downstream catalytic product all-trans-retinoic acid. The protein is Dehydrogenase/reductase SDR family member 7C (DHRS7C) of Bos taurus (Bovine).